A 104-amino-acid polypeptide reads, in one-letter code: Urease subunit beta (104 aa).

Belongs to the urease beta subunit family. Heterotrimer of UreA (gamma), UreB (beta) and UreC (alpha) subunits. Three heterotrimers associate to form the active enzyme.

It localises to the cytoplasm. It carries out the reaction urea + 2 H2O + H(+) = hydrogencarbonate + 2 NH4(+). The protein operates within nitrogen metabolism; urea degradation; CO(2) and NH(3) from urea (urease route): step 1/1. This Mycobacterium bovis (strain BCG / Pasteur 1173P2) protein is Urease subunit beta.